Here is a 201-residue protein sequence, read N- to C-terminus: Recombination protein RecR (201 aa).

The C4-type zinc-finger motif lies at C57–C72. The Toprim domain maps to T80–P176.

Belongs to the RecR family.

Its function is as follows. May play a role in DNA repair. It seems to be involved in an RecBC-independent recombinational process of DNA repair. It may act with RecF and RecO. This is Recombination protein RecR from Ureaplasma parvum serovar 3 (strain ATCC 27815 / 27 / NCTC 11736).